A 470-amino-acid polypeptide reads, in one-letter code: Probable E3 ubiquitin-protein ligase TRIML1 (470 aa).

An RING-type zinc finger spans residues 22–63; the sequence is CFICLDYFSSPVTTECGHSFCLMCLLKSWEEHNTPLSCPECW. Coiled-coil stretches lie at residues 135–170 and 196–235; these read SEAEEQHKEKLQDIINILRKKKKEVQAILNHEKERV and KEEEQLQLQLLEREEKANMKKLRENEIQLTQQIRRLGKMI. A B30.2/SPRY domain is found at 273-470; it reads TELSLCHITG…NTDPLIICHI (198 aa).

In terms of assembly, interacts with USP5. Testis.

The enzyme catalyses S-ubiquitinyl-[E2 ubiquitin-conjugating enzyme]-L-cysteine + [acceptor protein]-L-lysine = [E2 ubiquitin-conjugating enzyme]-L-cysteine + N(6)-ubiquitinyl-[acceptor protein]-L-lysine.. It functions in the pathway protein modification; protein ubiquitination. Functionally, probable E3 ubiquitin-protein ligase which plays an important role in blastocyst development. Involved in progression of blastocyst stage and subsequent embryo development. The sequence is that of Probable E3 ubiquitin-protein ligase TRIML1 (Triml1) from Mus musculus (Mouse).